Reading from the N-terminus, the 339-residue chain is Agamous-like MADS-box protein AGL86 (339 aa).

The MADS-box domain occupies 1–60 (MRSKIKLSLIANKTSRRTTFRKRKGGITNKLHELTTLCGVKACAVISSPYENPVVWPSTE). Positions 86–112 (TYLQDKITKETKKLESLRRENRESQLR) form a coiled coil.

As to quaternary structure, interacts with AGL61/DIANA and AGL62.

It is found in the nucleus. Probable transcription factor. This is Agamous-like MADS-box protein AGL86 (AGL86) from Arabidopsis thaliana (Mouse-ear cress).